A 207-amino-acid polypeptide reads, in one-letter code: Twist-related protein 1 (207 aa).

Low complexity predominate over residues Met-1–Ser-18. The interval Met-1–Glu-110 is disordered. Over residues Arg-34–Arg-43 the composition is skewed to basic residues. Composition is skewed to gly residues over residues Ala-46–Glu-65 and Gly-80–Ser-104. In terms of domain architecture, bHLH spans Thr-113 to Leu-164. Residues Gln-166 to Arg-196 form a sufficient for transactivation activity region.

Efficient DNA binding requires dimerization with another bHLH protein. Homodimer or heterodimer with E proteins such as TCF3. ID1 binds preferentially to TCF3 but does not interact efficiently with TWIST1 so ID1 levels control the amount of TCF3 available to dimerize with TWIST and thus determine the type of dimer formed.

The protein resides in the nucleus. Its function is as follows. Acts as a transcriptional regulator. Inhibits myogenesis by sequestrating E proteins, inhibiting trans-activation by MEF2, and inhibiting DNA-binding by MYOD1 through physical interaction. This interaction probably involves the basic domains of both proteins. Also represses expression of pro-inflammatory cytokines such as TNFA and IL1B. Regulates cranial suture patterning and fusion. Activates transcription as a heterodimer with E proteins. Regulates gene expression differentially, depending on dimer composition. Homodimers induce expression of FGFR2 and POSTN while heterodimers repress FGFR2 and POSTN expression and induce THBS1 expression. Heterodimerization is also required for osteoblast differentiation. Represses the activity of the circadian transcriptional activator: NPAS2-BMAL1 heterodimer. This Cebus capucinus (White-faced sapajou) protein is Twist-related protein 1 (TWIST1).